We begin with the raw amino-acid sequence, 433 residues long: Ligand-dependent corepressor (433 aa).

The tract at residues 1-147 (MQRMIQQFAA…GTREGFGHST (147 aa)) is disordered. The span at 13-34 (TSKTSSTQDPSQPNSTKNQSLP) shows a compositional bias: polar residues. Residues 36–48 (ASPVTTSPTAATT) show a composition bias toward low complexity. At Ser-42 the chain carries Phosphoserine. The short motif at 53 to 57 (LSKLL) is the Interaction with nuclear receptors element. The residue at position 63 (Ser-63) is a Phosphoserine. The span at 88-110 (KKSPCASSTSLSHSPGCSSTQGN) shows a compositional bias: polar residues. Ser-249 carries the post-translational modification Phosphoserine. Residue Lys-254 forms a Glycyl lysine isopeptide (Lys-Gly) (interchain with G-Cter in SUMO2) linkage. Positions 299-348 (QNRKSMLDAGPDSWGSDAEQSTSGQPYPTSDQEGDPGSKQPRKKRGRYRQ) are disordered. Residues 316-329 (AEQSTSGQPYPTSD) show a composition bias toward polar residues. The short motif at 339-345 (PRKKRGR) is the Nuclear localization signal element. Residues 340-392 (RKKRGRYRQYNSEILEEAISVVMSGKMSVSKAQSIYGIPHSTLEYKVKERLGT) enclose the HTH psq-type domain. The segment at residues 368-388 (VSKAQSIYGIPHSTLEYKVKE) is a DNA-binding region (H-T-H motif). A disordered region spans residues 393–412 (LKNPPKKKMKLMRSEGPDVS). Lys-414 participates in a covalent cross-link: Glycyl lysine isopeptide (Lys-Gly) (interchain with G-Cter in SUMO2).

Interacts with ESR1 and ESR2 in the presence of estradiol. Interacts with CTBP1, HDAC3 and HDAC6. Component of a large corepressor complex that contains about 20 proteins, including CTBP1, CTBP2, HDAC1 and HDAC2. Detected in heart and kidney.

The protein localises to the nucleus. Functionally, repressor of ligand-dependent transcription activation by various nuclear repressors. Repressor of ligand-dependent transcription activation by ESR1, ESR2, NR3C1, PGR, RARA, RARB, RARG, RXRA and VDR. May act as transcription activator that binds DNA elements with the sequence 5'-CCCTATCGATCGATCTCTACCT-3'. The chain is Ligand-dependent corepressor (Lcor) from Mus musculus (Mouse).